Reading from the N-terminus, the 229-residue chain is tRNA (guanine-N(1)-)-methyltransferase (229 aa).

S-adenosyl-L-methionine is bound by residues G109 and 129 to 134 (IGDFIL).

This sequence belongs to the RNA methyltransferase TrmD family. As to quaternary structure, homodimer.

It is found in the cytoplasm. The enzyme catalyses guanosine(37) in tRNA + S-adenosyl-L-methionine = N(1)-methylguanosine(37) in tRNA + S-adenosyl-L-homocysteine + H(+). Specifically methylates guanosine-37 in various tRNAs. In Helicobacter pylori (strain Shi470), this protein is tRNA (guanine-N(1)-)-methyltransferase.